The following is a 310-amino-acid chain: Phosphoribosylaminoimidazole-succinocarboxamide synthase (310 aa).

This sequence belongs to the SAICAR synthetase family.

It carries out the reaction 5-amino-1-(5-phospho-D-ribosyl)imidazole-4-carboxylate + L-aspartate + ATP = (2S)-2-[5-amino-1-(5-phospho-beta-D-ribosyl)imidazole-4-carboxamido]succinate + ADP + phosphate + 2 H(+). It functions in the pathway purine metabolism; IMP biosynthesis via de novo pathway; 5-amino-1-(5-phospho-D-ribosyl)imidazole-4-carboxamide from 5-amino-1-(5-phospho-D-ribosyl)imidazole-4-carboxylate: step 1/2. The chain is Phosphoribosylaminoimidazole-succinocarboxamide synthase from Cytophaga hutchinsonii (strain ATCC 33406 / DSM 1761 / CIP 103989 / NBRC 15051 / NCIMB 9469 / D465).